Here is a 434-residue protein sequence, read N- to C-terminus: Histidinol dehydrogenase (434 aa).

Residues tyrosine 130, glutamine 188, and asparagine 211 each contribute to the NAD(+) site. The substrate site is built by serine 237, glutamine 259, and histidine 262. Zn(2+) is bound by residues glutamine 259 and histidine 262. Active-site proton acceptor residues include glutamate 326 and histidine 327. Histidine 327, aspartate 360, glutamate 414, and histidine 419 together coordinate substrate. Residue aspartate 360 coordinates Zn(2+). Histidine 419 contacts Zn(2+).

This sequence belongs to the histidinol dehydrogenase family. As to quaternary structure, homodimer. Zn(2+) serves as cofactor.

It carries out the reaction L-histidinol + 2 NAD(+) + H2O = L-histidine + 2 NADH + 3 H(+). Its pathway is amino-acid biosynthesis; L-histidine biosynthesis; L-histidine from 5-phospho-alpha-D-ribose 1-diphosphate: step 9/9. Its function is as follows. Catalyzes the sequential NAD-dependent oxidations of L-histidinol to L-histidinaldehyde and then to L-histidine. The chain is Histidinol dehydrogenase from Escherichia coli O157:H7.